Consider the following 553-residue polypeptide: Zinc finger matrin-type protein 1 (553 aa).

The interval 16 to 36 (TPSSPAATCSGPMAGGDTSSN) is disordered. Matrin-type zinc fingers lie at residues 61-91 (TFCK…KVRL), 125-155 (KFCG…KMRQ), 223-253 (KYCK…NQAR), and 275-305 (YVCP…KESM). Disordered regions lie at residues 341–402 (QFRQ…DQRV) and 428–553 (HISR…ILGF). Positions 350-362 (DSCDYEEEEEQEP) are enriched in acidic residues. Low complexity predominate over residues 431 to 453 (RSPTSQDSSDNSSGSSSDESSGS). Over residues 456-476 (KDKRRKRKHHRESRLRGSGRI) the composition is skewed to basic residues. A compositionally biased stretch (basic and acidic residues) spans 477 to 513 (RRGDENSEKRKRKGEDADSGKEDNKHDRGKTSGGDKD).

It localises to the nucleus. In Xenopus tropicalis (Western clawed frog), this protein is Zinc finger matrin-type protein 1 (zmat1).